Reading from the N-terminus, the 472-residue chain is Arginine biosynthesis bifunctional protein ArgJ, mitochondrial (472 aa).

Positions 200, 229, 240, 327, 467, and 472 each coordinate substrate. T240 serves as the catalytic Nucleophile.

It belongs to the ArgJ family. In terms of assembly, heterodimer of an alpha and a beta chain. Post-translationally, the alpha and beta chains are autoproteolytically processed from a single precursor protein within the mitochondrion.

It localises to the mitochondrion matrix. The catalysed reaction is N(2)-acetyl-L-ornithine + L-glutamate = N-acetyl-L-glutamate + L-ornithine. It carries out the reaction L-glutamate + acetyl-CoA = N-acetyl-L-glutamate + CoA + H(+). It functions in the pathway amino-acid biosynthesis; L-arginine biosynthesis; L-ornithine and N-acetyl-L-glutamate from L-glutamate and N(2)-acetyl-L-ornithine (cyclic): step 1/1. It participates in amino-acid biosynthesis; L-arginine biosynthesis; N(2)-acetyl-L-ornithine from L-glutamate: step 1/4. In terms of biological role, catalyzes two activities which are involved in the cyclic version of arginine biosynthesis: the synthesis of acetylglutamate from glutamate and acetyl-CoA, and of ornithine by transacetylation between acetylornithine and glutamate. The chain is Arginine biosynthesis bifunctional protein ArgJ, mitochondrial from Talaromyces marneffei (strain ATCC 18224 / CBS 334.59 / QM 7333) (Penicillium marneffei).